We begin with the raw amino-acid sequence, 412 residues long: STAGA complex 65 subunit gamma (412 aa).

A disordered region spans residues 81 to 107; sequence AQTQSQQQTEGVKAEESEPLPSCPGSP. Ser106 carries the post-translational modification Phosphoserine. Lys269 participates in a covalent cross-link: Glycyl lysine isopeptide (Lys-Gly) (interchain with G-Cter in SUMO2). 2 positions are modified to phosphoserine: Ser321 and Ser332. Positions 364-412 are disordered; that stretch reads EEPMSGMSEAGLPQSPDDSDSSYGSHSTDSLMGSSPVFNQRCRKRMRKI. Residues 384 to 393 are compositionally biased toward low complexity; the sequence is SSYGSHSTDS.

Component of the STAGA transcription coactivator-HAT complex, at least composed of SUPT3H, SUPT7L, GCN5L2, TAF5L, TAF6L, TADA3L, TAD1L, TAF10, TAF12 and TAF9. Post-translationally, sumoylated.

The protein localises to the nucleus. This is STAGA complex 65 subunit gamma (Supt7l) from Mus musculus (Mouse).